We begin with the raw amino-acid sequence, 257 residues long: MAPKDVRALIREGKINGPTAGMSGGYAQANLVVLKKDLAFDFLLFCQRNQKPCPVLDVTEAGSPVPSLAAPDADIRTDFPKYRIYRHGILTEEVSDITPYWEDDFVGFLIGCSFSFEQALINNGIAVRHIDEGTNVSMYKTNIDCVPAGAFHGQMVVSMRPVPERLAVRAAQVTSRFPAVHGGPIHIGNPGAIGIRDLGKPDFGDAVSIRDGEVPVFWACGVTPQAVAMNVKPEMVITHAPGHMLITDIRDESLAVL.

It belongs to the D-glutamate cyclase family.

The chain is Putative hydro-lyase YcsI (ycsI) from Bacillus subtilis (strain 168).